Reading from the N-terminus, the 230-residue chain is Leucyl/phenylalanyl-tRNA--protein transferase (230 aa).

Belongs to the L/F-transferase family.

It is found in the cytoplasm. It catalyses the reaction N-terminal L-lysyl-[protein] + L-leucyl-tRNA(Leu) = N-terminal L-leucyl-L-lysyl-[protein] + tRNA(Leu) + H(+). The catalysed reaction is N-terminal L-arginyl-[protein] + L-leucyl-tRNA(Leu) = N-terminal L-leucyl-L-arginyl-[protein] + tRNA(Leu) + H(+). The enzyme catalyses L-phenylalanyl-tRNA(Phe) + an N-terminal L-alpha-aminoacyl-[protein] = an N-terminal L-phenylalanyl-L-alpha-aminoacyl-[protein] + tRNA(Phe). Its function is as follows. Functions in the N-end rule pathway of protein degradation where it conjugates Leu, Phe and, less efficiently, Met from aminoacyl-tRNAs to the N-termini of proteins containing an N-terminal arginine or lysine. This chain is Leucyl/phenylalanyl-tRNA--protein transferase, found in Rhodopseudomonas palustris (strain BisB18).